Consider the following 256-residue polypeptide: MTDVARILKEARDQGRMTALDYASLIFDEFMELHGDRQFADDGSIVGGIAYLADQPVTVIGIQKGKNLQDNLARNFGQPHPEGYRKALRLMKQAEKFGRPVITFINTAGAYPGVGAEERGQGEAIARNLMEMSDLKVPIIAIIIGEGGSGGALALAVADQVWMLENTMYAVLSPEGFASILWKDGSRATEAAELMKITAAELYQMGVIDRIIPERGYFSSEIVEMIKLHLIDEITQLQAKPLEELLDQRYQRFRKY.

The 236-residue stretch at 1–236 (MTDVARILKE…KLHLIDEITQ (236 aa)) folds into the CoA carboxyltransferase C-terminal domain.

The protein belongs to the AccA family. As to quaternary structure, acetyl-CoA carboxylase is a heterohexamer composed of biotin carboxyl carrier protein (AccB), biotin carboxylase (AccC) and two subunits each of ACCase subunit alpha (AccA) and ACCase subunit beta (AccD).

It is found in the cytoplasm. The catalysed reaction is N(6)-carboxybiotinyl-L-lysyl-[protein] + acetyl-CoA = N(6)-biotinyl-L-lysyl-[protein] + malonyl-CoA. Its pathway is lipid metabolism; malonyl-CoA biosynthesis; malonyl-CoA from acetyl-CoA: step 1/1. In terms of biological role, component of the acetyl coenzyme A carboxylase (ACC) complex. First, biotin carboxylase catalyzes the carboxylation of biotin on its carrier protein (BCCP) and then the CO(2) group is transferred by the carboxyltransferase to acetyl-CoA to form malonyl-CoA. This chain is Acetyl-coenzyme A carboxylase carboxyl transferase subunit alpha, found in Streptococcus equi subsp. zooepidemicus (strain H70).